Consider the following 334-residue polypeptide: Small ribosomal subunit protein uS2 (334 aa).

It belongs to the universal ribosomal protein uS2 family.

The chain is Small ribosomal subunit protein uS2 from Xanthobacter autotrophicus (strain ATCC BAA-1158 / Py2).